Reading from the N-terminus, the 798-residue chain is Integrin beta-5 (798 aa).

A signal peptide spans 1–23; the sequence is MPRVPATLYACLLGLCALVPRLA. The Extracellular portion of the chain corresponds to 24-719; the sequence is GLNICTSGSA…REPECGSAPN (696 aa). Positions 27–76 constitute a PSI domain; sequence ICTSGSATSCEECLLIHPKCAWCSKEYFGNPRSITSRCDLKANLIRNGCE. 19 cysteine pairs are disulfide-bonded: cysteine 28–cysteine 46, cysteine 36–cysteine 463, cysteine 39–cysteine 64, cysteine 49–cysteine 75, cysteine 202–cysteine 211, cysteine 259–cysteine 300, cysteine 401–cysteine 413, cysteine 433–cysteine 461, cysteine 465–cysteine 484, cysteine 476–cysteine 487, cysteine 489–cysteine 498, cysteine 500–cysteine 530, cysteine 513–cysteine 528, cysteine 522–cysteine 533, cysteine 535–cysteine 548, cysteine 550–cysteine 571, cysteine 555–cysteine 569, cysteine 563–cysteine 574, and cysteine 576–cysteine 585. The 243-residue stretch at 136 to 378 folds into the VWFA domain; the sequence is YPVDLYYLMD…QLIINAYSSI (243 aa). Serine 147 and serine 149 together coordinate Mg(2+). Ca(2+)-binding residues include serine 149, aspartate 152, aspartate 153, and aspartate 184. Ca(2+)-binding residues include asparagine 242, aspartate 244, proline 246, and glutamate 247. Glutamate 247 contributes to the Mg(2+) binding site. The N-linked (GlcNAc...) asparagine glycan is linked to asparagine 347. A Ca(2+)-binding site is contributed by glycine 362. Asparagine 460 and asparagine 479 each carry an N-linked (GlcNAc...) asparagine glycan. 4 I-EGF domains span residues 465–499, 500–549, 550–586, and 587–626; these read CSTGLEPNSARCSGNGTYTCGLCECDPGYLGTRCE, CQEG…PFCE, CDSFSCARNKGVLCSGHGECHCGECKCHAGYIGDNCN, and CSTDVSTCKAKDGQICSDRGRCVCGQCQCTEPGAFGETCE. The N-linked (GlcNAc...) asparagine glycan is linked to asparagine 505. Asparagine 586 carries N-linked (GlcNAc...) asparagine glycosylation. Cystine bridges form between cysteine 587–cysteine 610, cysteine 594–cysteine 608, cysteine 602–cysteine 613, cysteine 615–cysteine 625, cysteine 628–cysteine 631, cysteine 635–cysteine 682, cysteine 641–cysteine 661, cysteine 644–cysteine 657, and cysteine 690–cysteine 714. Asparagine 654 and asparagine 705 each carry an N-linked (GlcNAc...) asparagine glycan. A helical membrane pass occupies residues 720 to 742; sequence AMTILLAVVGSILLIGMALLAIW. Residues 743 to 798 lie on the Cytoplasmic side of the membrane; that stretch reads KLLVTIHDRREFAKFQSERSRARYEMASNPLYRKPISTHTVDFAFNKFNKSYNGSV. Serine 770 bears the Phosphoserine mark.

Belongs to the integrin beta chain family. Heterodimer of an alpha and a beta subunit. Beta-5 (ITGB5) associates with alpha-V (ITGAV). Interacts with MYO10. Interacts with DAB2. Integrin ITGAV:ITGB5 interacts with FBLN5 (via N-terminus). ITGAV:ITGB5 interacts with CCN3. Interacts with tensin TNS3; TNS3 also interacts with PEAK1, thus acting as an adapter molecule to bridge the association of PEAK1 with ITGB5.

The protein localises to the cell membrane. Integrin alpha-V/beta-5 (ITGAV:ITGB5) is a receptor for fibronectin. It recognizes the sequence R-G-D in its ligand. The protein is Integrin beta-5 (Itgb5) of Mus musculus (Mouse).